The sequence spans 191 residues: MNFLLTWIHWGLAALLYFHNAKVLQAAPAQGDGERQQGEVIPFLKVYERSICRPVETMVDIFQEYPDEVEYIFKPSCVALMRCGGCCNDEALECVPTEMYNVTMEVMKLKPFQSQHIHPVSFQQHSKCECRPKKDIRNKDNHCEPCSERRKHLYKQDPLTCKCSCKAPDLRCKSKQLELNERTCRCERPRR.

The N-terminal stretch at 1–26 is a signal peptide; sequence MNFLLTWIHWGLAALLYFHNAKVLQA. Disulfide bonds link C52–C94, C83–C128, and C87–C130. The N-linked (GlcNAc...) asparagine glycan is linked to N101.

Belongs to the PDGF/VEGF growth factor family. In terms of assembly, homodimer; disulfide-linked. Also found as heterodimer with PGF. As to expression, expressed by the venom gland, and probably other tissues.

The protein localises to the secreted. Growth factor active in angiogenesis, vasculogenesis and endothelial cell growth. Induces endothelial cell proliferation, promotes cell migration, inhibits apoptosis and induces permeabilization of blood vessels. Binds to heparan sulfate and heparin. This Bitis gabonica (Gaboon adder) protein is Vascular endothelial growth factor A.